Reading from the N-terminus, the 257-residue chain is Hydroxyethylthiazole kinase (257 aa).

M42 is a substrate binding site. ATP-binding residues include R117 and T163. Position 190 (A190) interacts with substrate.

Belongs to the Thz kinase family. The cofactor is Mg(2+).

It carries out the reaction 5-(2-hydroxyethyl)-4-methylthiazole + ATP = 4-methyl-5-(2-phosphooxyethyl)-thiazole + ADP + H(+). It participates in cofactor biosynthesis; thiamine diphosphate biosynthesis; 4-methyl-5-(2-phosphoethyl)-thiazole from 5-(2-hydroxyethyl)-4-methylthiazole: step 1/1. Functionally, catalyzes the phosphorylation of the hydroxyl group of 4-methyl-5-beta-hydroxyethylthiazole (THZ). The sequence is that of Hydroxyethylthiazole kinase from Roseobacter denitrificans (strain ATCC 33942 / OCh 114) (Erythrobacter sp. (strain OCh 114)).